The following is a 75-amino-acid chain: MARYFRRRKFCRFTTEGVVEIDYKDIATLKNYITESGKIVPSRITGTRAKYQRQLARAIKRARYLSLLPYTDRHQ.

This sequence belongs to the bacterial ribosomal protein bS18 family. Part of the 30S ribosomal subunit. Forms a tight heterodimer with protein bS6.

Binds as a heterodimer with protein bS6 to the central domain of the 16S rRNA, where it helps stabilize the platform of the 30S subunit. The chain is Small ribosomal subunit protein bS18 from Sodalis glossinidius (strain morsitans).